Reading from the N-terminus, the 238-residue chain is Proteasome subunit beta type-6 (238 aa).

Alanine 2 is modified (N-acetylalanine). The propeptide at 2–33 (AAALAVRRAGSAPAFGPEALTPDWENREVSTG) is removed in mature form. Residue threonine 34 is the Nucleophile of the active site. Residue threonine 68 is modified to Phosphothreonine.

Belongs to the peptidase T1B family. In terms of assembly, the 26S proteasome consists of a 20S proteasome core and two 19S regulatory subunits. The 20S proteasome core is a barrel-shaped complex made of 28 subunits that are arranged in four stacked rings. The two outer rings are each formed by seven alpha subunits, and the two inner rings are formed by seven beta subunits. The proteolytic activity is exerted by three beta-subunits PSMB5, PSMB6 and PSMB7.

It is found in the cytoplasm. The protein resides in the nucleus. The enzyme catalyses Cleavage of peptide bonds with very broad specificity.. Component of the 20S core proteasome complex involved in the proteolytic degradation of most intracellular proteins. This complex plays numerous essential roles within the cell by associating with different regulatory particles. Associated with two 19S regulatory particles, forms the 26S proteasome and thus participates in the ATP-dependent degradation of ubiquitinated proteins. The 26S proteasome plays a key role in the maintenance of protein homeostasis by removing misfolded or damaged proteins that could impair cellular functions, and by removing proteins whose functions are no longer required. Associated with the PA200 or PA28, the 20S proteasome mediates ubiquitin-independent protein degradation. This type of proteolysis is required in several pathways including spermatogenesis (20S-PA200 complex) or generation of a subset of MHC class I-presented antigenic peptides (20S-PA28 complex). Within the 20S core complex, PSMB6 displays a peptidylglutamyl-hydrolyzing activity also termed postacidic or caspase-like activity, meaning that the peptides bond hydrolysis occurs directly after acidic residues. This is Proteasome subunit beta type-6 (Psmb6) from Mus musculus (Mouse).